The sequence spans 133 residues: Holo-[acyl-carrier-protein] synthase (133 aa).

Asp8 and Glu57 together coordinate Mg(2+).

It belongs to the P-Pant transferase superfamily. AcpS family. It depends on Mg(2+) as a cofactor.

Its subcellular location is the cytoplasm. The catalysed reaction is apo-[ACP] + CoA = holo-[ACP] + adenosine 3',5'-bisphosphate + H(+). Its function is as follows. Transfers the 4'-phosphopantetheine moiety from coenzyme A to a Ser of acyl-carrier-protein. This chain is Holo-[acyl-carrier-protein] synthase, found in Caulobacter sp. (strain K31).